A 314-amino-acid chain; its full sequence is DNA-directed RNA polymerase subunit alpha (314 aa).

The tract at residues 1 to 228 is alpha N-terminal domain (alpha-NTD); it reads MIEIEKPNIE…EHLNIFVGLT (228 aa). The tract at residues 245 to 314 is alpha C-terminal domain (alpha-CTD); it reads KEKVLEMTIE…ELGLGLRNEE (70 aa).

This sequence belongs to the RNA polymerase alpha chain family. In terms of assembly, homodimer. The RNAP catalytic core consists of 2 alpha, 1 beta, 1 beta' and 1 omega subunit. When a sigma factor is associated with the core the holoenzyme is formed, which can initiate transcription.

The catalysed reaction is RNA(n) + a ribonucleoside 5'-triphosphate = RNA(n+1) + diphosphate. Its function is as follows. DNA-dependent RNA polymerase catalyzes the transcription of DNA into RNA using the four ribonucleoside triphosphates as substrates. The sequence is that of DNA-directed RNA polymerase subunit alpha from Shouchella clausii (strain KSM-K16) (Alkalihalobacillus clausii).